The sequence spans 549 residues: Solute carrier family 22 member 6 (549 aa).

The Cytoplasmic segment spans residues 1 to 23; that stretch reads MAFNDLLLQLGGVGRFQKIQVTL. A helical transmembrane segment spans residues 24 to 44; it reads VILPLILLASHNTLQNFTAAI. The Extracellular segment spans residues 45–135; the sequence is PTHHCRPPAD…LVCSHRALRQ (91 aa). Asn-56, Asn-92, and Asn-113 each carry an N-linked (GlcNAc...) asparagine glycan. The helical transmembrane segment at 136 to 156 threads the bilayer; it reads LAQSLYMMGVLLGAMTFGCLA. Residues 157–164 lie on the Cytoplasmic side of the membrane; the sequence is DRLGRRKV. The helical transmembrane segment at 165–185 threads the bilayer; it reads LIFNYLQTAVSGTCAAFAPNF. Residues 186–195 lie on the Extracellular side of the membrane; it reads PAYCAFRFLS. Residues 196 to 216 traverse the membrane as a helical segment; it reads GMSTAGVVLNCMTLNVEWMPI. The Cytoplasmic segment spans residues 217-224; it reads HTRAYVGT. Residues 225–245 traverse the membrane as a helical segment; the sequence is LTGYVYSLGQFLLAGMAYAVP. The Extracellular portion of the chain corresponds to 246–248; sequence HWR. A helical membrane pass occupies residues 249-269; sequence YLQLLVSAPFFAFFIYSWFFI. At 270-337 the chain is on the cytoplasmic side; sequence ESARWYASSG…ELIRCPALRR (68 aa). Residues 338 to 358 form a helical membrane-spanning segment; that stretch reads LFLCLSMLWFATSFAYYGLVM. Topologically, residues 359–368 are extracellular; the sequence is DLQGFGVSIY. Residues 369–389 traverse the membrane as a helical segment; the sequence is LIQVIFGAVDLPAKLVSFLVI. Residues 390-395 are Cytoplasmic-facing; that stretch reads NNVGRR. The chain crosses the membrane as a helical span at residues 396-416; it reads PAQMASLLLAGICILINGVVP. The Extracellular segment spans residues 417-425; that stretch reads KDKSIVRTS. The chain crosses the membrane as a helical span at residues 426 to 446; it reads LAVLGKGCLASSFNCIFLYTG. The Cytoplasmic portion of the chain corresponds to 447–456; that stretch reads EVYPTMIRQT. The helical transmembrane segment at 457-477 threads the bilayer; sequence GLGMGSTLARVGSIVSPLVSM. At 478 to 484 the chain is on the extracellular side; it reads TAELYPS. The chain crosses the membrane as a helical span at residues 485-505; sequence VPLFIYGAVPVAASAAIALLP. At 506 to 549 the chain is on the cytoplasmic side; that stretch reads ETLGQPLPDTVQDVENRRRGKTRKQQEELQKQMVPLQASAQVKN. Residues 521–549 are disordered; the sequence is NRRRGKTRKQQEELQKQMVPLQASAQVKN.

This sequence belongs to the major facilitator (TC 2.A.1) superfamily. Organic cation transporter (TC 2.A.1.19) family. Post-translationally, glycosylated. Glycosylation is necessary for proper targeting of the transporter to the plasma membrane.

It is found in the basolateral cell membrane. Its subcellular location is the basal cell membrane. The catalysed reaction is (6R)-L-erythro-5,6,7,8-tetrahydrobiopterin(out) + a dicarboxylate(in) = (6R)-L-erythro-5,6,7,8-tetrahydrobiopterin(in) + a dicarboxylate(out). It catalyses the reaction L-erythro-7,8-dihydrobiopterin(out) + a dicarboxylate(in) = L-erythro-7,8-dihydrobiopterin(in) + a dicarboxylate(out). The enzyme catalyses L-sepiapterin(out) + a dicarboxylate(in) = L-sepiapterin(in) + a dicarboxylate(out). It carries out the reaction prostaglandin F2alpha(out) + a dicarboxylate(in) = prostaglandin F2alpha(in) + a dicarboxylate(out). The catalysed reaction is prostaglandin E2(out) + a dicarboxylate(in) = prostaglandin E2(in) + a dicarboxylate(out). It catalyses the reaction 3',5'-cyclic AMP(out) + a dicarboxylate(in) = 3',5'-cyclic AMP(in) + a dicarboxylate(out). The enzyme catalyses 3',5'-cyclic GMP(out) + a dicarboxylate(in) = 3',5'-cyclic GMP(in) + a dicarboxylate(out). It carries out the reaction urate(out) + a dicarboxylate(in) = urate(in) + a dicarboxylate(out). The catalysed reaction is kynurenate(out) + glutarate(in) = kynurenate(in) + glutarate(out). It catalyses the reaction (indol-3-yl)acetate(out) + a dicarboxylate(in) = (indol-3-yl)acetate(in) + a dicarboxylate(out). The enzyme catalyses indoxyl sulfate(out) + a dicarboxylate(in) = indoxyl sulfate(in) + a dicarboxylate(out). It carries out the reaction N-benzoylglycine(out) + a dicarboxylate(in) = N-benzoylglycine(in) + a dicarboxylate(out). The catalysed reaction is 3-carboxy-4-methyl-5-propyl-2-furanpropanoate(out) + a dicarboxylate(in) = 3-carboxy-4-methyl-5-propyl-2-furanpropanoate(in) + a dicarboxylate(out). Functionally, secondary active transporter that functions as a Na(+)-independent organic anion (OA)/dicarboxylate antiporter where the uptake of one molecule of OA into the cell is coupled with an efflux of one molecule of intracellular dicarboxylate such as 2-oxoglutarate or glutarate. Mediates the uptake of OA across the basolateral side of proximal tubule epithelial cells, thereby contributing to the renal elimination of endogenous OA from the systemic circulation into the urine. Functions as a biopterin transporters involved in the uptake and the secretion of coenzymes tetrahydrobiopterin (BH4), dihydrobiopterin (BH2) and sepiapterin to urine, thereby determining baseline levels of blood biopterins. Transports prostaglandin E2 (PGE2) and prostaglandin F2-alpha (PGF2-alpha) and may contribute to their renal excretion. Also mediates the uptake of cyclic nucleotides such as cAMP and cGMP. Involved in the transport of neuroactive tryptophan metabolites kynurenate (KYNA) and xanthurenate (XA) and may contribute to their secretion from the brain. May transport glutamate. Also involved in the disposition of uremic toxins and potentially toxic xenobiotics by the renal organic anion secretory pathway, helping reduce their undesired toxicological effects on the body. Uremic toxins include the indoxyl sulfate (IS), hippurate/N-benzoylglycine (HA), indole acetate (IA), 3-carboxy-4- methyl-5-propyl-2-furanpropionate (CMPF) and urate. Xenobiotics include the mycotoxin ochratoxin (OTA). May also contribute to the transport of organic compounds in testes across the blood-testis-barrier. The polypeptide is Solute carrier family 22 member 6 (Bos taurus (Bovine)).